The chain runs to 469 residues: Secreted triacylglycerol lipase LIP3 (469 aa).

The first 21 residues, 1 to 21 (MVSLLWKFTLLCLFLLACTSA), serve as a signal peptide directing secretion. Residues cysteine 121 and cysteine 292 are joined by a disulfide bond. Serine 205 serves as the catalytic Nucleophile. Asparagine 238 is a glycosylation site (N-linked (GlcNAc...) asparagine). Catalysis depends on residues aspartate 352 and histidine 386.

It belongs to the AB hydrolase superfamily. Lipase family. Class Lip subfamily.

It localises to the secreted. The catalysed reaction is a triacylglycerol + H2O = a diacylglycerol + a fatty acid + H(+). The enzyme catalyses a monoacylglycerol + H2O = glycerol + a fatty acid + H(+). It catalyses the reaction a diacylglycerol + H2O = a monoacylglycerol + a fatty acid + H(+). In terms of biological role, secreted lipase that hydrolyzes acylglycerol lipids such as triacylglycerols and consequently releases free fatty acid. Generates free oleic acid from the substrates mono- and diolein and hydrolyzes triolein in significant amounts. Due to an absence of fatty acid synthase genes in Malassezia species, secretory lipases are essential for the yeast to generate free fatty acids from degradation of sebum and assimilate them as lipid sources for growth. Plays an essential role at the pathogen-host interface during disease progression. Performs also the reverse reaction to build diacyl- and triacyl- glycerols from monoacylglycerols. In Malassezia restricta (strain ATCC 96810 / NBRC 103918 / CBS 7877) (Seborrheic dermatitis infection agent), this protein is Secreted triacylglycerol lipase LIP3.